The primary structure comprises 37 residues: MKVRPSVKKMCDKCKIIKRRGVIRVICATPKHKQRQG.

Belongs to the bacterial ribosomal protein bL36 family.

The protein is Large ribosomal subunit protein bL36 of Helicobacter pylori (strain HPAG1).